The following is a 650-amino-acid chain: Serine/threonine-protein kinase oca2 (650 aa).

Residues 1–14 show a composition bias toward polar residues; it reads MSVTPPNVQFNLNG. Disordered stretches follow at residues 1 to 210 and 222 to 288; these read MSVT…PHDI and HHGK…KSSA. Ser72 is subject to Phosphoserine. Positions 78-98 are enriched in basic and acidic residues; sequence NHIDPKLAEDRYRSSAARHFE. Residues 140 to 154 show a composition bias toward polar residues; the sequence is PSGSTGYTSPALSQN. Basic residues-rich tracts occupy residues 222-231 and 245-257; these read HHGKHGHHGH and HDKH…HEKH. The span at 258–279 shows a compositional bias: basic and acidic residues; that stretch reads HSSLDLRRFFKSHQKTDKEKKP. Ser286 carries the phosphoserine modification. The Protein kinase domain occupies 302–614; sequence GKFGRMLGSG…IHRVFADNWI (313 aa). Residues 308 to 316 and Lys331 each bind ATP; that span reads LGSGAGGSV. The active-site Proton acceptor is Asp425. The disordered stretch occupies residues 549–570; sequence PIRKTDESHSPNSKTDNSSTHK.

The protein belongs to the protein kinase superfamily. Ser/Thr protein kinase family.

It localises to the cytoplasm. The catalysed reaction is L-seryl-[protein] + ATP = O-phospho-L-seryl-[protein] + ADP + H(+). It carries out the reaction L-threonyl-[protein] + ATP = O-phospho-L-threonyl-[protein] + ADP + H(+). In terms of biological role, overexpression causes cell cycle arrest. This chain is Serine/threonine-protein kinase oca2, found in Schizosaccharomyces pombe (strain 972 / ATCC 24843) (Fission yeast).